Here is a 235-residue protein sequence, read N- to C-terminus: NAD(P)H-quinone oxidoreductase subunit K, chloroplastic (235 aa).

[4Fe-4S] cluster contacts are provided by Cys-43, Cys-44, Cys-108, and Cys-139.

It belongs to the complex I 20 kDa subunit family. In terms of assembly, NDH is composed of at least 16 different subunits, 5 of which are encoded in the nucleus. The cofactor is [4Fe-4S] cluster.

The protein resides in the plastid. Its subcellular location is the chloroplast thylakoid membrane. It carries out the reaction a plastoquinone + NADH + (n+1) H(+)(in) = a plastoquinol + NAD(+) + n H(+)(out). It catalyses the reaction a plastoquinone + NADPH + (n+1) H(+)(in) = a plastoquinol + NADP(+) + n H(+)(out). Its function is as follows. NDH shuttles electrons from NAD(P)H:plastoquinone, via FMN and iron-sulfur (Fe-S) centers, to quinones in the photosynthetic chain and possibly in a chloroplast respiratory chain. The immediate electron acceptor for the enzyme in this species is believed to be plastoquinone. Couples the redox reaction to proton translocation, and thus conserves the redox energy in a proton gradient. The polypeptide is NAD(P)H-quinone oxidoreductase subunit K, chloroplastic (Ipomoea purpurea (Common morning glory)).